A 538-amino-acid polypeptide reads, in one-letter code: Chaperonin GroEL (538 aa).

Residues 29–32 (TIGP), 86–90 (DGTTT), Gly413, 476–478 (NAA), and Asp492 contribute to the ATP site.

The protein belongs to the chaperonin (HSP60) family. In terms of assembly, forms a cylinder of 14 subunits composed of two heptameric rings stacked back-to-back. Interacts with the co-chaperonin GroES.

It localises to the cytoplasm. The catalysed reaction is ATP + H2O + a folded polypeptide = ADP + phosphate + an unfolded polypeptide.. Functionally, together with its co-chaperonin GroES, plays an essential role in assisting protein folding. The GroEL-GroES system forms a nano-cage that allows encapsulation of the non-native substrate proteins and provides a physical environment optimized to promote and accelerate protein folding. The chain is Chaperonin GroEL from Staphylococcus aureus (strain USA300).